The following is a 177-amino-acid chain: Large ribosomal subunit protein uL6 (177 aa).

This sequence belongs to the universal ribosomal protein uL6 family. As to quaternary structure, part of the 50S ribosomal subunit.

Its function is as follows. This protein binds to the 23S rRNA, and is important in its secondary structure. It is located near the subunit interface in the base of the L7/L12 stalk, and near the tRNA binding site of the peptidyltransferase center. The sequence is that of Large ribosomal subunit protein uL6 from Paracidovorax citrulli (strain AAC00-1) (Acidovorax citrulli).